The primary structure comprises 352 residues: DNA polymerase IV (352 aa).

The UmuC domain maps to 6-186; that stretch reads IIHIDMDAFY…LPLGKIPGVG (181 aa). 2 residues coordinate Mg(2+): Asp-10 and Asp-104. Residue Glu-105 is part of the active site.

The protein belongs to the DNA polymerase type-Y family. As to quaternary structure, monomer. Mg(2+) serves as cofactor.

It is found in the cytoplasm. It carries out the reaction DNA(n) + a 2'-deoxyribonucleoside 5'-triphosphate = DNA(n+1) + diphosphate. Its function is as follows. Poorly processive, error-prone DNA polymerase involved in untargeted mutagenesis. Copies undamaged DNA at stalled replication forks, which arise in vivo from mismatched or misaligned primer ends. These misaligned primers can be extended by PolIV. Exhibits no 3'-5' exonuclease (proofreading) activity. May be involved in translesional synthesis, in conjunction with the beta clamp from PolIII. In Neisseria meningitidis serogroup A / serotype 4A (strain DSM 15465 / Z2491), this protein is DNA polymerase IV.